A 302-amino-acid polypeptide reads, in one-letter code: Putative T-box protein 34 (302 aa).

Residues 5–180 constitute a DNA-binding region (T-box); that stretch reads IVNEHKYREL…KMNLAPGSSQ (176 aa).

The protein resides in the nucleus. This chain is Putative T-box protein 34 (tbx-34), found in Caenorhabditis elegans.